The following is a 192-amino-acid chain: Orotate phosphoribosyltransferase (192 aa).

Residues arginine 84, lysine 88, and 110-118 each bind 5-phospho-alpha-D-ribose 1-diphosphate; that span reads DDVLTTGNS. Threonine 114 and arginine 142 together coordinate orotate.

Belongs to the purine/pyrimidine phosphoribosyltransferase family. PyrE subfamily. Homodimer. The cofactor is Mg(2+).

It catalyses the reaction orotidine 5'-phosphate + diphosphate = orotate + 5-phospho-alpha-D-ribose 1-diphosphate. Its pathway is pyrimidine metabolism; UMP biosynthesis via de novo pathway; UMP from orotate: step 1/2. Catalyzes the transfer of a ribosyl phosphate group from 5-phosphoribose 1-diphosphate to orotate, leading to the formation of orotidine monophosphate (OMP). The protein is Orotate phosphoribosyltransferase of Pyrobaculum calidifontis (strain DSM 21063 / JCM 11548 / VA1).